Here is a 374-residue protein sequence, read N- to C-terminus: Flavonoid O-methyltransferase-like protein Os11g0303600 (374 aa).

4 residues coordinate S-adenosyl-L-homocysteine: aspartate 242, aspartate 262, methionine 263, and lysine 276. Histidine 280 functions as the Proton acceptor in the catalytic mechanism.

This sequence belongs to the class I-like SAM-binding methyltransferase superfamily. Cation-independent O-methyltransferase family. COMT subfamily.

This is Flavonoid O-methyltransferase-like protein Os11g0303600 from Oryza sativa subsp. japonica (Rice).